The chain runs to 516 residues: UDP-N-acetylmuramyl-tripeptide synthetase (516 aa).

Ser38 contacts UDP-N-acetyl-alpha-D-muramoyl-L-alanyl-D-glutamate. 116 to 122 serves as a coordination point for ATP; sequence GTKGKTT. Residues 162–163, Ser189, and Arg197 each bind UDP-N-acetyl-alpha-D-muramoyl-L-alanyl-D-glutamate; that span reads TT. Lys231 is subject to N6-carboxylysine.

The protein belongs to the MurCDEF family. MurE subfamily. Post-translationally, carboxylation is probably crucial for Mg(2+) binding and, consequently, for the gamma-phosphate positioning of ATP.

It is found in the cytoplasm. Its pathway is cell wall biogenesis; peptidoglycan biosynthesis. Functionally, catalyzes the addition of an amino acid to the nucleotide precursor UDP-N-acetylmuramoyl-L-alanyl-D-glutamate (UMAG) in the biosynthesis of bacterial cell-wall peptidoglycan. In Lactobacillus delbrueckii subsp. bulgaricus (strain ATCC 11842 / DSM 20081 / BCRC 10696 / JCM 1002 / NBRC 13953 / NCIMB 11778 / NCTC 12712 / WDCM 00102 / Lb 14), this protein is UDP-N-acetylmuramyl-tripeptide synthetase.